The following is an 80-amino-acid chain: Acyl carrier protein (80 aa).

In terms of domain architecture, Carrier spans 2 to 77 (KNIEERIKKI…KSIDFIQKKN (76 aa)). Position 37 is an O-(pantetheine 4'-phosphoryl)serine (Ser37).

This sequence belongs to the acyl carrier protein (ACP) family. In terms of processing, 4'-phosphopantetheine is transferred from CoA to a specific serine of apo-ACP by AcpS. This modification is essential for activity because fatty acids are bound in thioester linkage to the sulfhydryl of the prosthetic group.

The protein localises to the cytoplasm. It functions in the pathway lipid metabolism; fatty acid biosynthesis. In terms of biological role, carrier of the growing fatty acid chain in fatty acid biosynthesis. The protein is Acyl carrier protein of Buchnera aphidicola subsp. Acyrthosiphon pisum (strain APS) (Acyrthosiphon pisum symbiotic bacterium).